Here is a 192-residue protein sequence, read N- to C-terminus: Outer-membrane lipoprotein LolB (192 aa).

The first 17 residues, 1–17 (MTYRTLCILAFTALISA), serve as a signal peptide directing secretion. Cys-18 carries the N-palmitoyl cysteine lipid modification. Cys-18 carries the S-diacylglycerol cysteine lipid modification.

Belongs to the LolB family. Monomer.

Its subcellular location is the cell outer membrane. Its function is as follows. Plays a critical role in the incorporation of lipoproteins in the outer membrane after they are released by the LolA protein. In Marinomonas sp. (strain MWYL1), this protein is Outer-membrane lipoprotein LolB.